The sequence spans 177 residues: Mitochondrial inner membrane protease subunit 2 (177 aa).

Active-site residues include S41 and K91. A helical membrane pass occupies residues 134 to 152 (TFGPISSGLVIGKAITIVW).

The protein belongs to the peptidase S26 family. IMP2 subfamily. Component of the mitochondrial inner membrane peptidase (IMP) complex which at least consists of IMP1, IMP2 and SOM1. The N-terminus is blocked.

It localises to the mitochondrion inner membrane. Its function is as follows. Catalytic component of the mitochondrial inner membrane peptidase (IMP) complex. IMP catalyzes the removal of signal peptides required for the targeting of proteins from the mitochondrial matrix, across the inner membrane, into the inter-membrane space. The two catalytic IMP subunits seem to have non-overlapping substrate specificities. IMP2 substrates include nuclear encoded CYB2, mitochondrially encoded COX2 and cytochrome c1. Required for the stability of IMP1. The sequence is that of Mitochondrial inner membrane protease subunit 2 (IMP2) from Saccharomyces cerevisiae (strain ATCC 204508 / S288c) (Baker's yeast).